The chain runs to 368 residues: DNA replication and repair protein RecF (368 aa).

ATP is bound at residue G30–T37.

The protein belongs to the RecF family.

The protein localises to the cytoplasm. The RecF protein is involved in DNA metabolism; it is required for DNA replication and normal SOS inducibility. RecF binds preferentially to single-stranded, linear DNA. It also seems to bind ATP. The protein is DNA replication and repair protein RecF of Xanthomonas campestris pv. campestris (strain 8004).